The sequence spans 703 residues: Bifunctional arginine dihydrolase/ornithine cyclodeaminase AgrE (703 aa).

Residues 10-269 (CPPDHYDVDY…GAAKCLTLRV (260 aa)) form an arginine dihydrolase region. L-arginine is bound by residues Asn22, Asp65, Asn71, Arg90, and Arg139. Asn22 is an L-ornithine binding site. Residues Arg90, Arg139, and His168 each contribute to the L-ornithine site. The Proton donor/acceptor role is filled by His168. Asp170 and Ala258 together coordinate L-arginine. Residue Cys264 participates in L-ornithine binding. Residue Cys264 is the Nucleophile of the active site. Residues 285–694 (SRIIRIEGHL…SLLTQQLDKL (410 aa)) are ornithine cyclodeaminase. NAD(+)-binding residues include Asn524, Ala525, Asp603, Ser635, Met636, Leu637, His638, Asp656, Asp679, and Val680.

It in the N-terminal section; belongs to the DDAH family. This sequence in the C-terminal section; belongs to the AgrE/ArgZ ornithine cyclodeaminase family. As to quaternary structure, homotetramer. NAD(+) serves as cofactor.

The catalysed reaction is L-arginine + 2 H2O + 2 H(+) = L-ornithine + 2 NH4(+) + CO2. The enzyme catalyses L-ornithine = L-proline + NH4(+). Ornithine cyclodeaminase activity is inhibited by ATP. Bifunctional enzyme involved in a cyanobacterial arginine utilization pathway that produces glutamate and enables cellular adaptation to nitrogen fluctuations. Catalyzes the hydrolysis of arginine to ornithine, with the release of ammonia and carbon dioxide. Then, catalyzes the conversion of ornithine to proline, with the release of ammonia. The protein is Bifunctional arginine dihydrolase/ornithine cyclodeaminase AgrE of Nostoc sp. (strain PCC 7120 / SAG 25.82 / UTEX 2576).